Here is a 103-residue protein sequence, read N- to C-terminus: N(4)-acetylcytidine amidohydrolase (103 aa).

Positions 6 to 94 (ITFFQRFQND…IAEIYPNQTQ (89 aa)) constitute an ASCH domain. Lys21 (proton acceptor) is an active-site residue. Thr24 acts as the Nucleophile in catalysis. Glu74 functions as the Proton donor in the catalytic mechanism.

Belongs to the N(4)-acetylcytidine amidohydrolase family.

It carries out the reaction N(4)-acetylcytidine + H2O = cytidine + acetate + H(+). The catalysed reaction is N(4)-acetyl-2'-deoxycytidine + H2O = 2'-deoxycytidine + acetate + H(+). It catalyses the reaction N(4)-acetylcytosine + H2O = cytosine + acetate + H(+). Catalyzes the hydrolysis of N(4)-acetylcytidine (ac4C). The chain is N(4)-acetylcytidine amidohydrolase (yqfB) from Salmonella schwarzengrund (strain CVM19633).